The following is a 158-amino-acid chain: Protein Smg homolog (158 aa).

This sequence belongs to the Smg family.

The chain is Protein Smg homolog from Shewanella oneidensis (strain ATCC 700550 / JCM 31522 / CIP 106686 / LMG 19005 / NCIMB 14063 / MR-1).